The primary structure comprises 286 residues: MTKADTIFKENITKIMEEGVWSEQARPKYKDGTTANSKYITGSFAEYDLSKGEFPITTLRPIAIKSAIKEVFWIYQDQTNSLDVLEDKYNVHYWNDWEVEGVPANNGDKRSIGQRYGAVVKKHDIINRLLAQLEANPWNRRNVISLWDYEAFEETAGLQPCAFQTMFDVRRVGEDVYLDATLTQRSNDMLVAHHINAMQYVALQMMIAKHFGWKIGKFFYFINNLHIYDNQFEQAEELLKRQPSDCQPRLVLNVPDETNFFDIKPEDFELVDYDPVKPQLKFDLAI.

140–141 contributes to the dUMP binding site; that stretch reads RR. Cys161 acts as the Nucleophile in catalysis. Residues 185–188, Asn196, and 226–228 each bind dUMP; these read RSND and HIY. Asp188 contacts (6R)-5,10-methylene-5,6,7,8-tetrahydrofolate. Ala285 contributes to the (6R)-5,10-methylene-5,6,7,8-tetrahydrofolate binding site.

Belongs to the thymidylate synthase family. Bacterial-type ThyA subfamily. In terms of assembly, homodimer.

It localises to the cytoplasm. The catalysed reaction is dUMP + (6R)-5,10-methylene-5,6,7,8-tetrahydrofolate = 7,8-dihydrofolate + dTMP. The protein operates within pyrimidine metabolism; dTTP biosynthesis. Catalyzes the reductive methylation of 2'-deoxyuridine-5'-monophosphate (dUMP) to 2'-deoxythymidine-5'-monophosphate (dTMP) while utilizing 5,10-methylenetetrahydrofolate (mTHF) as the methyl donor and reductant in the reaction, yielding dihydrofolate (DHF) as a by-product. This enzymatic reaction provides an intracellular de novo source of dTMP, an essential precursor for DNA biosynthesis. The chain is Thymidylate synthase from Streptococcus thermophilus (strain CNRZ 1066).